The primary structure comprises 555 residues: Xylulose kinase (555 aa).

Substrate-binding residues include His88, Arg158, Asp274, and Asn275. ATP contacts are provided by residues Trp357, 455-456 (GA), and Asn459.

The protein belongs to the FGGY kinase family.

The protein resides in the cytoplasm. The enzyme catalyses D-xylulose + ATP = D-xylulose 5-phosphate + ADP + H(+). The polypeptide is Xylulose kinase (Schizosaccharomyces pombe (strain 972 / ATCC 24843) (Fission yeast)).